Consider the following 464-residue polypeptide: tRNA modification GTPase MnmE (464 aa).

3 residues coordinate (6S)-5-formyl-5,6,7,8-tetrahydrofolate: Arg-25, Glu-87, and Lys-130. Positions 226 to 386 (GLSVVLAGQP…LRAELLRIAG (161 aa)) constitute a TrmE-type G domain. Asn-236 is a K(+) binding site. GTP is bound by residues 236 to 241 (NVGKSS), 255 to 261 (TPIAGTT), and 280 to 283 (DTAG). Mg(2+) is bound at residue Ser-240. Residues Thr-255, Ile-257, and Thr-260 each contribute to the K(+) site. Mg(2+) is bound at residue Thr-261. Lys-464 contributes to the (6S)-5-formyl-5,6,7,8-tetrahydrofolate binding site.

The protein belongs to the TRAFAC class TrmE-Era-EngA-EngB-Septin-like GTPase superfamily. TrmE GTPase family. Homodimer. Heterotetramer of two MnmE and two MnmG subunits. The cofactor is K(+).

It is found in the cytoplasm. Exhibits a very high intrinsic GTPase hydrolysis rate. Involved in the addition of a carboxymethylaminomethyl (cmnm) group at the wobble position (U34) of certain tRNAs, forming tRNA-cmnm(5)s(2)U34. This Burkholderia lata (strain ATCC 17760 / DSM 23089 / LMG 22485 / NCIMB 9086 / R18194 / 383) protein is tRNA modification GTPase MnmE.